Consider the following 976-residue polypeptide: MSTKVLDPAFQGAGQKPGTEIWRIENFEAVPVPKSEHGKFYMGDTYIVLQTTQNKGGAYLFDIHFWIGKDTSQDEAGTAAVKTVELDAVLGGRAVQHREIQGHESDKFLSYFKPCIIPLEGGVASGFKTVEEEVFETRLYTCKGKRAIRLKQVPFARSSLNHDDVFILDTEEKIYQFNGANSNIQERAKALEVVQYLKDKYHEGTCDVAIVDDGKLDTESDSGAFWVLFGGFAPIGRKVANDDDIVPESTPPKLYCITDGKMEPIDGDLSKSMLENTKCYLLDCGAEIYIWVGRVTQVDERKAASQSAEEFLASENRPKATHVTRVIQGYESHSFKSNFDSWPSGSATPGNEEGRGKVAALLKQQGVGLKGIAKSAPVNEDIPPLLESGGKLEVWYVNGKVKTPLPKEDIGKLYSGDCYLVLYTYHSGERKDEYFLSCWFGKKSIPEDQDTAIRLANTMSNSLKGRPVQGRIYEGKEPPQFVALFQPMVVLKGGLSSGYKSSMGESESTDETYTPESIALVQVSGTGVHNNKAVQVETVATSLNSYECFLLQSGTSMFLWHGNQSTHEQLELATKVAEFLKPGITLKHAKEGTESSTFWFALGGKQNFTSKKASSETIRDPHLFSFAFNRGKFQVEEIYNFAQDDLLTEDIYFLDTHAEVFVWVGQCVEPKEKQTVFEIGQKYIDLAGSLEGLHPKVPIYKINEGNEPCFFTTYFSWDATKAIVQGNSFQKKASLLFGTHHVVEDKSNGGNQGLRQRAEALAALNSAFNSSSNRPAYSSQDRLNESHDGPRQRAEALAALSSAFNSSSSSTKSPPPPRPVGTSQASQRAAAVAALSQVLVAENKKSPDTSPTRRSTSSNPADDIPLTEAKDEEEASEVAGLEAKEEEEVSPAADETEAKQETEEQGDSEIQPSGATFTYEQLRAKSENPVTGIDFKRREAYLSEEEFQSVFGIEKEAFNNLPRWKQDLLKKKFDLF.

Gelsolin-like repeat units follow at residues 27-77 (FEAV…DEAG), 148-188 (IRLK…QERA), 260-302 (GKME…DERK), 399-450 (GKVK…EDQD), 531-571 (NKAV…EQLE), and 633-674 (FQVE…KEKQ). Residues 769–917 (NSSSNRPAYS…SEIQPSGATF (149 aa)) form a disordered region. Over residues 782–794 (RLNESHDGPRQRA) the composition is skewed to basic and acidic residues. Low complexity-rich tracts occupy residues 795–812 (EALA…SSTK), 823–841 (SQAS…VLVA), and 848–858 (DTSPTRRSTSS). Serine 890 carries the post-translational modification Phosphoserine. The span at 908–917 (SEIQPSGATF) shows a compositional bias: polar residues. The HP domain occupies 911-976 (QPSGATFTYE…DLLKKKFDLF (66 aa)).

This sequence belongs to the villin/gelsolin family. As to expression, expressed in all tissues examined. Mainly detected in the root epidermis and vasculature. Expressed in the root cap.

Its subcellular location is the cytoplasm. It localises to the cytoskeleton. Functionally, ca(2+)-regulated actin-binding protein. Involved in actin filaments bundling. Caps the barbed end of actin filaments and is able to sever them in a calcium-dependent manner. Required for the construction of actin collars in pollen tubes. Acts redundantly with VLN5 (AC Q9LVC6) to generate thick actin filament bundles and to regulate polarized pollen tube growth. Acts redundantly with VLN3 (AC O81645) to regulate directional organ growth and in sclerenchyma development. This chain is Villin-2, found in Arabidopsis thaliana (Mouse-ear cress).